Here is a 501-residue protein sequence, read N- to C-terminus: Mitogen-activated protein kinase MKC1 (501 aa).

Residues 28 to 339 (FKIVKELGHG…VRDALNHKYL (312 aa)) enclose the Protein kinase domain. Residues 34–42 (LGHGAYGIV) and Lys-74 contribute to the ATP site. Asp-174 acts as the Proton acceptor in catalysis. Phosphothreonine is present on Thr-211. The short motif at 211-213 (TEY) is the TXY element. A Phosphotyrosine modification is found at Tyr-213. Positions 400–450 (MQKREEQRQEEEEKELLEQQRQFPAQESMDISQTPYNNLETNIGTPQVEDD) are disordered. Over residues 422–444 (FPAQESMDISQTPYNNLETNIGT) the composition is skewed to polar residues.

Belongs to the protein kinase superfamily. CMGC Ser/Thr protein kinase family. MAP kinase subfamily. Mg(2+) serves as cofactor. In terms of processing, dually phosphorylated on Thr-211 and Tyr-213, which activates the enzyme.

It catalyses the reaction L-seryl-[protein] + ATP = O-phospho-L-seryl-[protein] + ADP + H(+). The enzyme catalyses L-threonyl-[protein] + ATP = O-phospho-L-threonyl-[protein] + ADP + H(+). Its activity is regulated as follows. Activated by tyrosine and threonine phosphorylation. This is Mitogen-activated protein kinase MKC1 (MKC1) from Candida albicans (Yeast).